A 392-amino-acid chain; its full sequence is uncharacterized protein (392 aa).

Belongs to the mimivirus L17x/L18x family.

This is an uncharacterized protein from Acanthamoeba polyphaga (Amoeba).